Reading from the N-terminus, the 674-residue chain is Carcinine transporter (674 aa).

Residues 1–53 are Cytoplasmic-facing; the sequence is MSDIEDNDGDEYDELSELRQRHKPESQPSVDEAFDLDDLLPTIGEFGKYQKLL. Residues 54-74 form a helical membrane-spanning segment; the sequence is VFGICLPACIPCGFCAFNQLF. The Extracellular segment spans residues 75-178; sequence MADTPDDYWC…DLVCDQDIYP (104 aa). N-linked (GlcNAc...) asparagine glycosylation is found at asparagine 122, asparagine 141, and asparagine 156. Residues 179–199 traverse the membrane as a helical segment; the sequence is TIGLAALNTGGPVGVYLFGLL. Residues 200–206 are Cytoplasmic-facing; sequence NDRGGRR. A helical membrane pass occupies residues 207-227; it reads LSYFVCLATLLAGSLMTSLSK. Residues 228 to 236 lie on the Extracellular side of the membrane; sequence DFWTWAGSR. Residues 237–257 form a helical membrane-spanning segment; the sequence is VIVGLTIPAVYQIPFIISLEL. Residues 258-264 are Cytoplasmic-facing; that stretch reads VGENYRS. Residues 265 to 285 traverse the membrane as a helical segment; the sequence is FVTVMTCTFYTSGIMLLSGVT. The Extracellular portion of the chain corresponds to 286 to 293; that stretch reads YLERDWVR. The helical transmembrane segment at 294 to 314 threads the bilayer; it reads LSYITSLPFYAYFLYMFVMPE. Residues 315-385 lie on the Cytoplasmic side of the membrane; the sequence is SPRWLLMRGR…CRTPNMRLKT (71 aa). A helical membrane pass occupies residues 386-406; the sequence is ILITLSWFANETVYLGLSYYG. The Extracellular segment spans residues 407-414; the sequence is PALGTNQY. A helical transmembrane segment spans residues 415-435; sequence VSFFLSAVVELPSYLCCWYFM. Residues 436–441 are Cytoplasmic-facing; it reads DTWGRR. A helical transmembrane segment spans residues 442–462; the sequence is WPLSLSMILGGVACVITVMLP. Topologically, residues 463–469 are extracellular; sequence DDAVDET. A helical membrane pass occupies residues 470–490; sequence LVLYLVSKALLSASFLIIYPF. Residues 491–500 lie on the Cytoplasmic side of the membrane; that stretch reads AGELYPTQVR. A helical transmembrane segment spans residues 501–521; the sequence is GIGIGASSYIGGLGLIGIPFI. Over 522–527 the chain is Extracellular; it reads TYLGKD. The helical transmembrane segment at 528-548 threads the bilayer; sequence NLKLPLVIMGFLSMLGGMTGL. The Cytoplasmic portion of the chain corresponds to 549–674; that stretch reads RLPETLHHRL…DGTMQLTHWI (126 aa). Over residues 614-631 the composition is skewed to basic and acidic residues; it reads RDSRRVREPAPRIDERTP. Residues 614-647 are disordered; sequence RDSRRVREPAPRIDERTPLDTTASGSGRPVHRPS.

This sequence belongs to the major facilitator (TC 2.A.1) superfamily. Organic cation transporter (TC 2.A.1.19) family. In terms of tissue distribution, expressed in photoreceptor cells.

It localises to the cell membrane. The protein resides in the cell projection. It is found in the axon. Its function is as follows. Carcinine transporter which is required for recycling of the neurotransmitter histamine in photoreceptor neurons of the compound eye. Following histamine release from photoreceptors and its uptake by glia where it is converted to carcinine, required for the uptake of carcinine from glia into photoreceptor cells where it can be hydrolyzed by tan to form histamine and beta-alanine. This chain is Carcinine transporter, found in Drosophila melanogaster (Fruit fly).